A 240-amino-acid chain; its full sequence is MRMAFMLLALLFSFRNASIQAEDARLLQPKTNALDLVVQGVDLVLFAQDKTAISISTPPEKDVFFTEHEGVLRVRTRTENAEGTRRVIRIGIPRAQTLAWVKIIATGAHTTVRGVRAVWSLLLCNEGTLALTESTLKSCTLTHTRGELRFEAAVLKRASFCLNDVNARFTLLGSRADYRLICSPGERAWKIEGAEQRGAHYTEPARARRHMVISASASSIDVMFKAPPTQQEAVDTTQKG.

An N-terminal signal peptide occupies residues Met-1–Ala-17.

This is an uncharacterized protein from Treponema pallidum (strain Nichols).